Here is a 323-residue protein sequence, read N- to C-terminus: tRNA U34 carboxymethyltransferase (323 aa).

Carboxy-S-adenosyl-L-methionine-binding positions include lysine 93, tryptophan 107, lysine 112, glycine 132, 154-156 (DPS), 182-183 (VE), methionine 197, tyrosine 201, and arginine 316.

The protein belongs to the class I-like SAM-binding methyltransferase superfamily. CmoB family. In terms of assembly, homotetramer.

It catalyses the reaction carboxy-S-adenosyl-L-methionine + 5-hydroxyuridine(34) in tRNA = 5-carboxymethoxyuridine(34) in tRNA + S-adenosyl-L-homocysteine + H(+). Its function is as follows. Catalyzes carboxymethyl transfer from carboxy-S-adenosyl-L-methionine (Cx-SAM) to 5-hydroxyuridine (ho5U) to form 5-carboxymethoxyuridine (cmo5U) at position 34 in tRNAs. This is tRNA U34 carboxymethyltransferase from Pseudoalteromonas atlantica (strain T6c / ATCC BAA-1087).